Reading from the N-terminus, the 97-residue chain is MGSIPSKPCNNPEGPLLQGMEAADWTGIGVCLPPGGARGHIYCCTRLCHQRAASAHRSLLLPRTVQTGGTEREKPGPGQRKRGAHCSACKRSSTRPS.

Positions 58 to 97 (SLLLPRTVQTGGTEREKPGPGQRKRGAHCSACKRSSTRPS) are disordered.

This is an uncharacterized protein from Homo sapiens (Human).